We begin with the raw amino-acid sequence, 359 residues long: UDP-3-O-acylglucosamine N-acyltransferase (359 aa).

The active-site Proton acceptor is His-248.

This sequence belongs to the transferase hexapeptide repeat family. LpxD subfamily. Homotrimer.

It carries out the reaction a UDP-3-O-[(3R)-3-hydroxyacyl]-alpha-D-glucosamine + a (3R)-hydroxyacyl-[ACP] = a UDP-2-N,3-O-bis[(3R)-3-hydroxyacyl]-alpha-D-glucosamine + holo-[ACP] + H(+). The protein operates within bacterial outer membrane biogenesis; LPS lipid A biosynthesis. Functionally, catalyzes the N-acylation of UDP-3-O-acylglucosamine using 3-hydroxyacyl-ACP as the acyl donor. Is involved in the biosynthesis of lipid A, a phosphorylated glycolipid that anchors the lipopolysaccharide to the outer membrane of the cell. The protein is UDP-3-O-acylglucosamine N-acyltransferase of Chlamydia abortus (strain DSM 27085 / S26/3) (Chlamydophila abortus).